The sequence spans 315 residues: DNA-directed RNA polymerase subunit alpha (315 aa).

The tract at residues 1 to 228 (MIEIEKPKVD…EHLNLFIDLT (228 aa)) is alpha N-terminal domain (alpha-NTD). The tract at residues 245 to 315 (KEKVLEMTIE…LGLGLKPSEE (71 aa)) is alpha C-terminal domain (alpha-CTD).

Belongs to the RNA polymerase alpha chain family. As to quaternary structure, homodimer. The RNAP catalytic core consists of 2 alpha, 1 beta, 1 beta' and 1 omega subunit. When a sigma factor is associated with the core the holoenzyme is formed, which can initiate transcription.

It catalyses the reaction RNA(n) + a ribonucleoside 5'-triphosphate = RNA(n+1) + diphosphate. DNA-dependent RNA polymerase catalyzes the transcription of DNA into RNA using the four ribonucleoside triphosphates as substrates. The sequence is that of DNA-directed RNA polymerase subunit alpha from Clostridioides difficile (strain 630) (Peptoclostridium difficile).